Here is a 326-residue protein sequence, read N- to C-terminus: Fructokinase (326 aa).

A disordered region spans residues 275–326 (EQALRNGPDPRRQSRRRHRLPRRRQSTLGARDWSLRLEQDSDPHPPDDTFSP). Basic residues predominate over residues 287–299 (QSRRRHRLPRRRQ). The segment covering 307–326 (WSLRLEQDSDPHPPDDTFSP) has biased composition (basic and acidic residues).

The protein belongs to the carbohydrate kinase PfkB family.

The catalysed reaction is D-fructose + ATP = D-fructose 6-phosphate + ADP + H(+). The protein is Fructokinase (frk) of Rhizobium leguminosarum bv. trifolii.